A 742-amino-acid chain; its full sequence is Alginate lyase (742 aa).

A signal peptide spans 1–26 (MRLQPLFVSLALAAPCALLPTASLSA). Substrate is bound by residues R143, 153 to 156 (QVLN), Q204, H208, and 263 to 266 (YYQR). Y264 functions as the Proton donor in the catalytic mechanism. The active-site Proton acceptor is the H418. The Zn(2+) site is built by H420 and D438. Residue R443 participates in substrate binding. H469 provides a ligand contact to Zn(2+). E669 contributes to the substrate binding site.

Belongs to the polysaccharide lyase 17 family. Homodimer. Zn(2+) is required as a cofactor.

The protein localises to the periplasm. It catalyses the reaction Cleavage of 4-deoxy-alpha-L-erythro-hex-4-enopyranuronoside oligosaccharides into 4-deoxy-alpha-L-erythro-hex-4-enopyranuronate monosaccharides.. Its function is as follows. Polysaccharide lyase that catalyzes the depolymerization of alginate via a beta-elimination mechanism, cleaving the beta-1,4 glycosidic bond between two adjacent sugar residues. Acts specifically on alginate and each of its block structures, with highest activity toward poly-beta-D-mannuronate (poly-ManA). Shows an exolytic mode of action, producing unsaturated monomers. Displays a very low activity against poly-beta-D-glucuronate (poly-GlcA), and is not active on poly-alpha-D-galacturonate, hyaluronan, heparin, heparan sulfate and chondroitin sulfate. In Stenotrophomonas maltophilia (strain K279a), this protein is Alginate lyase.